Reading from the N-terminus, the 382-residue chain is D-alanine--D-alanine ligase (382 aa).

The ATP-grasp domain maps to 139-348 (KRLMRDAGLP…PPALMDALIA (210 aa)). Residue 168–223 (EALESRTLFVKPANMGSSVGVSRVADAGQFDQALAHAFAYDEKILIERAVPRAREI) participates in ATP binding. 3 residues coordinate Mg(2+): Asp-300, Glu-315, and Asn-317.

It belongs to the D-alanine--D-alanine ligase family. It depends on Mg(2+) as a cofactor. Mn(2+) serves as cofactor.

The protein resides in the cytoplasm. The enzyme catalyses 2 D-alanine + ATP = D-alanyl-D-alanine + ADP + phosphate + H(+). Its pathway is cell wall biogenesis; peptidoglycan biosynthesis. Functionally, cell wall formation. In Methylobacterium sp. (strain 4-46), this protein is D-alanine--D-alanine ligase.